Reading from the N-terminus, the 121-residue chain is Met-lysine-1a (121 aa).

The N-terminal stretch at 1–22 is a signal peptide; it reads MKSFVFALALIVAFACISESKS. A propeptide spanning residues 23 to 69 is cleaved from the precursor; that stretch reads DHTGYEEEENLEDSELTDLVTAALLEELAEASEMDDLSYTEEAGGER. Methionine amide is present on methionine 120.

Expressed by the venom gland.

It is found in the secreted. Functionally, shows no antimicrobial activity against Gram-positive bacterium B.subtilis B-501 or Gram-negative bacterium E.coli DH5-alpha at concentrations up to 20 ug/ml. Shows no toxicity towards insect (S.carnaria) larvae. This chain is Met-lysine-1a, found in Lachesana tarabaevi (Spider).